The sequence spans 213 residues: Adenylate kinase (213 aa).

14–19 (GSGKGT) is a binding site for ATP. The interval 34-63 (STGDLLRAIIREGTPNGLKAKAYLDKGAFV) is NMP. AMP-binding positions include T35, R40, 61–63 (AFV), 89–92 (GFPR), and Q96. The LID stretch occupies residues 129–162 (SRFLCPSCSRIYNTSQGHTECPDCHVPLIRRSDD). R130 lines the ATP pocket. Positions 133 and 136 each coordinate Zn(2+). 139-140 (IY) is an ATP binding site. C149 and C152 together coordinate Zn(2+). Positions 159 and 170 each coordinate AMP. Residue N198 coordinates ATP.

Belongs to the adenylate kinase family. In terms of assembly, monomer.

Its subcellular location is the cytoplasm. It catalyses the reaction AMP + ATP = 2 ADP. The protein operates within purine metabolism; AMP biosynthesis via salvage pathway; AMP from ADP: step 1/1. Catalyzes the reversible transfer of the terminal phosphate group between ATP and AMP. Plays an important role in cellular energy homeostasis and in adenine nucleotide metabolism. The chain is Adenylate kinase from Chlamydia pneumoniae (Chlamydophila pneumoniae).